Reading from the N-terminus, the 339-residue chain is Alpha-N-dichloroacetyl-p-aminophenylserinol N-oxygenase (339 aa).

The span at 1–19 (MRDHTDEKSEAAGNDDGHV) shows a compositional bias: basic and acidic residues. The segment at 1-22 (MRDHTDEKSEAAGNDDGHVRIG) is disordered. Residues glutamate 109, glutamate 144, histidine 147, glutamate 205, histidine 232, glutamate 236, and histidine 239 each contribute to the Fe cation site.

It belongs to the AurF N-oxygenase family. It depends on Fe(2+) as a cofactor.

It carries out the reaction alpha-N-dichloroacetyl-p-aminophenylserinol + AH2 + 2 O2 = chloramphenicol + A + 2 H2O. It participates in antibiotic biosynthesis. Involved in chloramphenicol biosynthesis. Catalyzes the six-electron oxidation of an aryl-amine precursor of chloramphenicol (NH2-CAM) to yield the aryl-nitro group of chloramphenicol (CAM). During catalysis, upon exposure of the diferrous cluster to O(2), ClmI forms an exceptionally long-lived peroxo intermediate (CmlI-peroxo), which reacts with NH2-CAM to form CAM. In Streptomyces venezuelae (strain ATCC 10712 / CBS 650.69 / DSM 40230 / JCM 4526 / NBRC 13096 / PD 04745), this protein is Alpha-N-dichloroacetyl-p-aminophenylserinol N-oxygenase.